Here is a 92-residue protein sequence, read N- to C-terminus: MPSTADERQLLDELRDLLAATVEDLTVEEIGPDSSLQDDLGVDSLARLELVAAIEDRWQIEVPQEQADRLTTVRQIAAHLAEAVAAPAGGTA.

A Carrier domain is found at 1 to 84; it reads MPSTADERQL…QIAAHLAEAV (84 aa). At Ser44 the chain carries O-(pantetheine 4'-phosphoryl)serine.

This sequence belongs to the acyl carrier protein (ACP) family. Post-translationally, 4'-phosphopantetheine is transferred from CoA to a specific serine of apo-ACP by AcpS. This modification is essential for activity because fatty acids are bound in thioester linkage to the sulfhydryl of the prosthetic group.

The protein resides in the cytoplasm. It functions in the pathway lipid metabolism; fatty acid biosynthesis. Functionally, carrier of the growing fatty acid chain in fatty acid biosynthesis. The chain is Acyl carrier protein from Streptomyces coelicolor (strain ATCC BAA-471 / A3(2) / M145).